Here is a 962-residue protein sequence, read N- to C-terminus: Phagocyte signaling-impaired protein (962 aa).

3 TPR repeats span residues 45 to 78 (LCAR…KPTD), 79 to 112 (DSTL…NPGN), and 523 to 560 (QIQL…FTNS). Residues 856–880 (TKVKKKQGDNKTQDTPQPVSEKERS) are disordered.

Belongs to the MDM20/NAA25 family. Component of the N-terminal acetyltransferase B (NatB) complex.

The protein resides in the lysosome. In terms of biological role, non-catalytic subunit of the NatB complex which catalyzes acetylation of the N-terminal methionine residues of proteins beginning with Met-Asp or Met-Glu. Has 2 roles in the larval immune response: required both for the phagocytic degradation of internalized bacteria and for the induction of Defensin in the fat body. Within the phagocytic blood cells, has a role in detection of infection and activation of the humoral immune response. The polypeptide is Phagocyte signaling-impaired protein (Drosophila pseudoobscura pseudoobscura (Fruit fly)).